The chain runs to 306 residues: Protoheme IX farnesyltransferase (306 aa).

Helical transmembrane passes span 31–50 (VIEL…QGGW), 55–77 (LILG…NCYI), 104–124 (LVFA…ISNW), 125–145 (LAAA…TLWL), 168–188 (WAAV…IVFL), 218–235 (GRAA…ATLA), 238–258 (LLLI…LAGG), and 286–306 (ASIS…LLPF).

The protein belongs to the UbiA prenyltransferase family. Protoheme IX farnesyltransferase subfamily.

Its subcellular location is the cell membrane. It catalyses the reaction heme b + (2E,6E)-farnesyl diphosphate + H2O = Fe(II)-heme o + diphosphate. It participates in porphyrin-containing compound metabolism; heme O biosynthesis; heme O from protoheme: step 1/1. Converts heme B (protoheme IX) to heme O by substitution of the vinyl group on carbon 2 of heme B porphyrin ring with a hydroxyethyl farnesyl side group. This chain is Protoheme IX farnesyltransferase, found in Clavibacter sepedonicus (Clavibacter michiganensis subsp. sepedonicus).